The following is a 275-amino-acid chain: 4-diphosphocytidyl-2-C-methyl-D-erythritol kinase (275 aa).

Lys14 is an active-site residue. 98-108 (PMGAGLGGGSS) is an ATP binding site. Asp140 is a catalytic residue.

The protein belongs to the GHMP kinase family. IspE subfamily.

The enzyme catalyses 4-CDP-2-C-methyl-D-erythritol + ATP = 4-CDP-2-C-methyl-D-erythritol 2-phosphate + ADP + H(+). Its pathway is isoprenoid biosynthesis; isopentenyl diphosphate biosynthesis via DXP pathway; isopentenyl diphosphate from 1-deoxy-D-xylulose 5-phosphate: step 3/6. In terms of biological role, catalyzes the phosphorylation of the position 2 hydroxy group of 4-diphosphocytidyl-2C-methyl-D-erythritol. The polypeptide is 4-diphosphocytidyl-2-C-methyl-D-erythritol kinase (Francisella tularensis subsp. novicida (strain U112)).